A 142-amino-acid polypeptide reads, in one-letter code: Hemoglobin subunit alpha-A (142 aa).

A Globin domain is found at 2 to 142; it reads VLSAADKTNV…VGTVLTAKYR (141 aa). His-59 serves as a coordination point for O2. His-88 contributes to the heme b binding site.

Belongs to the globin family. In terms of assembly, heterotetramer of two alpha chains and two beta chains. Red blood cells.

In terms of biological role, involved in oxygen transport from the lung to the various peripheral tissues. This chain is Hemoglobin subunit alpha-A (HBAA), found in Coturnix japonica (Japanese quail).